Reading from the N-terminus, the 556-residue chain is 2-succinyl-5-enolpyruvyl-6-hydroxy-3-cyclohexene-1-carboxylate synthase (556 aa).

It belongs to the TPP enzyme family. MenD subfamily. Homodimer. The cofactor is Mg(2+). Requires Mn(2+) as cofactor. It depends on thiamine diphosphate as a cofactor.

It carries out the reaction isochorismate + 2-oxoglutarate + H(+) = 5-enolpyruvoyl-6-hydroxy-2-succinyl-cyclohex-3-ene-1-carboxylate + CO2. Its pathway is quinol/quinone metabolism; 1,4-dihydroxy-2-naphthoate biosynthesis; 1,4-dihydroxy-2-naphthoate from chorismate: step 2/7. The protein operates within quinol/quinone metabolism; menaquinone biosynthesis. Its function is as follows. Catalyzes the thiamine diphosphate-dependent decarboxylation of 2-oxoglutarate and the subsequent addition of the resulting succinic semialdehyde-thiamine pyrophosphate anion to isochorismate to yield 2-succinyl-5-enolpyruvyl-6-hydroxy-3-cyclohexene-1-carboxylate (SEPHCHC). The sequence is that of 2-succinyl-5-enolpyruvyl-6-hydroxy-3-cyclohexene-1-carboxylate synthase from Citrobacter koseri (strain ATCC BAA-895 / CDC 4225-83 / SGSC4696).